Consider the following 328-residue polypeptide: Glutathionyl-hydroquinone reductase YqjG (328 aa).

C63 serves as the catalytic Nucleophile. Residues W96, 130-133 (RVTV), and 148-149 (ES) each bind glutathione. The region spanning 172 to 296 (PPALQTKIDE…VNFDHIRNHY (125 aa)) is the GST C-terminal domain. The Proton donor/acceptor role is filled by Y195. The interval 203–311 (QEAYDEAVAK…TINPTGIISI (109 aa)) is dimerization.

The protein belongs to the GST superfamily. Xi-class GSH transferase family. In terms of assembly, homodimer.

It catalyses the reaction 2-(glutathione-S-yl)-hydroquinone + glutathione = hydroquinone + glutathione disulfide. In terms of biological role, catalyzes glutathione (GSH)-dependent reduction of glutathionyl-hydroquinones (GS-HQs) to the corresponding hydroquinones. Can use a variety of GS-HQs as substrates, such as GS-p-hydroquinone (GS-HQ), GS-hydroxy-p-hydroquinone (GS-HHQ), GS-methyl-p-hydroquinone (GS-MHQ), GS-menadiol, and GS-trichloro-p-hydroquinone (GS-TriCH). Also displays GSH-dependent disulfide-bond reduction activity toward HED (2-hydroxyethyl disulfide), and is able to catalyze DMA (dimethylarsinate) reduction. Exhibits no GSH transferase activity with 1-chloro-2,4-dinitrobenzene (CDNB). The chain is Glutathionyl-hydroquinone reductase YqjG (yqjG) from Escherichia coli (strain K12).